The sequence spans 258 residues: Spindlin-3 (258 aa).

Residues 1–23 (MKTPFGKAAAGQRSRTGAGHGSV) form a disordered region. Tudor-like domain regions lie at residues 50 to 99 (VGCR…LELH), 129 to 178 (VGKA…YQLL), and 210 to 255 (VGKQ…YDLV). 2 histone H3K4me3 and H3R8me2a binding regions span residues Glu138 and 246–248 (DFH).

Belongs to the SPIN/STSY family. Interacts with C11orf84/SPINDOC.

In terms of biological role, exhibits H3K4me3-binding activity. This Pongo abelii (Sumatran orangutan) protein is Spindlin-3 (SPIN3).